Here is a 204-residue protein sequence, read N- to C-terminus: Ribonuclease HII (204 aa).

The RNase H type-2 domain occupies 14–203 (VGLCGVDEAG…VRLLLDQTSL (190 aa)). Aspartate 20, glutamate 21, and aspartate 112 together coordinate a divalent metal cation.

The protein belongs to the RNase HII family. Requires Mn(2+) as cofactor. Mg(2+) serves as cofactor.

The protein resides in the cytoplasm. The catalysed reaction is Endonucleolytic cleavage to 5'-phosphomonoester.. Endonuclease that specifically degrades the RNA of RNA-DNA hybrids. The polypeptide is Ribonuclease HII (Thiobacillus denitrificans (strain ATCC 25259 / T1)).